The following is a 689-amino-acid chain: DNA ligase (689 aa).

NAD(+) is bound by residues 40-44 (DAEYD), 89-90 (SL), and glutamate 121. Lysine 123 acts as the N6-AMP-lysine intermediate in catalysis. NAD(+)-binding residues include arginine 144, glutamate 179, lysine 295, and lysine 319. Zn(2+) contacts are provided by cysteine 413, cysteine 416, cysteine 431, and cysteine 437. One can recognise a BRCT domain in the interval 610 to 689 (REQSSLTGKI…AEWLTLVRDI (80 aa)).

This sequence belongs to the NAD-dependent DNA ligase family. LigA subfamily. Mg(2+) serves as cofactor. The cofactor is Mn(2+).

The catalysed reaction is NAD(+) + (deoxyribonucleotide)n-3'-hydroxyl + 5'-phospho-(deoxyribonucleotide)m = (deoxyribonucleotide)n+m + AMP + beta-nicotinamide D-nucleotide.. Its function is as follows. DNA ligase that catalyzes the formation of phosphodiester linkages between 5'-phosphoryl and 3'-hydroxyl groups in double-stranded DNA using NAD as a coenzyme and as the energy source for the reaction. It is essential for DNA replication and repair of damaged DNA. The chain is DNA ligase from Rickettsia bellii (strain RML369-C).